The primary structure comprises 628 residues: MBT domain-containing protein 1 (628 aa).

A disordered region spans residues 1-31; the sequence is MFDGYDSCSEDTSSSSSSEESEEEVAPLPSN. The segment at 45–80 adopts an FCS-type zinc-finger fold; it reads PDGKSGMATCEMCGMVGVRDAFYSKTKRFCSVSCSR. Cys-54, Cys-57, Cys-74, and Cys-78 together coordinate Zn(2+). Lys-115 is modified (N6-acetyllysine). MBT repeat units follow at residues 141-245, 253-350, 351-456, and 464-560; these read FSWG…LVPP, TNWK…IGHR, FKRS…LTPP, and FKWF…LQPP. 2 disordered regions span residues 560–590 and 606–628; these read PASQ…HKKM and NFLQ…KQEP. Residues 562–573 show a composition bias toward low complexity; the sequence is SQSSRENQSASS. Residues 574–590 are compositionally biased toward basic residues; sequence KQKKKAKSQQYKGHKKM. Over residues 609-620 the composition is skewed to polar residues; the sequence is QGASDQESNGSA.

Monomer. Component of the NuA4 histone acetyltransferase complex. Interacts with EPC1; interaction is direct and promotes recruitment of MBTD1 into the NuA4 histone acetyltransferase complex.

The protein localises to the nucleus. The protein resides in the chromosome. Chromatin reader component of the NuA4 histone acetyltransferase complex, a multiprotein complex involved in transcriptional activation of select genes principally by acetylation of nucleosomal histones H4 and H2A. The NuA4 complex plays a direct role in repair of DNA double-strand breaks (DSBs) by promoting homologous recombination (HR). MBTD1 specifically recognizes and binds monomethylated and dimethylated 'Lys-20' on histone H4 (H4K20me1 and H4K20me2, respectively). In the NuA4 complex, MBTD1 promotes recruitment of the complex to H4K20me marks by competing with TP53BP1 for binding to H4K20me. Following recruitment to H4K20me at DNA breaks, the NuA4 complex catalyzes acetylation of 'Lys-15' on histone H2A (H2AK15), blocking the ubiquitination mark required for TP53BP1 localization at DNA breaks, thereby promoting homologous recombination (HR). This chain is MBT domain-containing protein 1, found in Homo sapiens (Human).